We begin with the raw amino-acid sequence, 114 residues long: U5-lycotoxin-Ls1a (114 aa).

An N-terminal signal peptide occupies residues M1–S20. The propeptide occupies E21–R45. Cystine bridges form between C51–C66, C65–C93, and C77–C91.

It belongs to the neurotoxin 19 (CSTX) family. 04 (U1-Lctx) subfamily. Expressed by the venom gland.

Its subcellular location is the secreted. The sequence is that of U5-lycotoxin-Ls1a from Lycosa singoriensis (Wolf spider).